The chain runs to 298 residues: Probable endonuclease 4 (298 aa).

9 residues coordinate Zn(2+): H69, H111, E146, D180, H183, H215, D228, H230, and E260.

It belongs to the AP endonuclease 2 family. Zn(2+) is required as a cofactor.

It carries out the reaction Endonucleolytic cleavage to 5'-phosphooligonucleotide end-products.. Endonuclease IV plays a role in DNA repair. It cleaves phosphodiester bonds at apurinic or apyrimidinic (AP) sites, generating a 3'-hydroxyl group and a 5'-terminal sugar phosphate. The protein is Probable endonuclease 4 of Bacillus cytotoxicus (strain DSM 22905 / CIP 110041 / 391-98 / NVH 391-98).